Reading from the N-terminus, the 256-residue chain is Thrombin-like enzyme cerastocytin (256 aa).

An N-terminal signal peptide occupies residues 1-18 (MVLISVLASLLVLQLSYA). The propeptide occupies 19 to 24 (QKSSEL). A Peptidase S1 domain is found at 25 to 247 (VIGGAECNIN…YTDWIRNIIA (223 aa)). 5 disulfides stabilise this stretch: Cys31–Cys161, Cys98–Cys254, Cys140–Cys208, Cys172–Cys187, and Cys198–Cys223. A glycan (N-linked (GlcNAc...) asparagine) is linked at Asn44. Residues His65 and Asp108 each act as charge relay system in the active site. Residues Asn119, Asn120, and Asn152 are each glycosylated (N-linked (GlcNAc...) asparagine). Catalysis depends on Ser202, which acts as the Charge relay system.

It belongs to the peptidase S1 family. Snake venom subfamily. Monomer. Expressed by the venom gland.

It is found in the secreted. Its platelets aggregating activity is inhibited by chlorpromazine, theophylline mepacrine. Its platelet aggregating activity and its amidolytic activity are inhibited by PMSF, TPCK, TLCK and soybean trypsin inhibitors. Is unaffected by hirudin or by antithrombin-III in the presence of heparin. Its function is as follows. Thrombin-like snake venom serine protease which potently induces platelet aggregation and has fibrinogenolytic activities. Clots purified fibrinogen and hydrolyzes alpha-chains (FGA). High concentrations of this enzyme also cleave prothrombin (F2) and factor X (F10). Is also able to activate factor XIII (F8). The polypeptide is Thrombin-like enzyme cerastocytin (Cerastes cerastes (Horned desert viper)).